A 487-amino-acid polypeptide reads, in one-letter code: Glutamyl-tRNA(Gln) amidotransferase subunit A (487 aa).

Catalysis depends on charge relay system residues Lys79 and Ser158. The Acyl-ester intermediate role is filled by Ser182.

This sequence belongs to the amidase family. GatA subfamily. Heterotrimer of A, B and C subunits.

The enzyme catalyses L-glutamyl-tRNA(Gln) + L-glutamine + ATP + H2O = L-glutaminyl-tRNA(Gln) + L-glutamate + ADP + phosphate + H(+). Allows the formation of correctly charged Gln-tRNA(Gln) through the transamidation of misacylated Glu-tRNA(Gln) in organisms which lack glutaminyl-tRNA synthetase. The reaction takes place in the presence of glutamine and ATP through an activated gamma-phospho-Glu-tRNA(Gln). This Ehrlichia chaffeensis (strain ATCC CRL-10679 / Arkansas) protein is Glutamyl-tRNA(Gln) amidotransferase subunit A.